The sequence spans 83 residues: Putative regulatory protein FMG_0656 (83 aa).

This sequence belongs to the RemA family.

The protein is Putative regulatory protein FMG_0656 of Finegoldia magna (strain ATCC 29328 / DSM 20472 / WAL 2508) (Peptostreptococcus magnus).